The following is a 231-amino-acid chain: Large ribosomal subunit protein uL1 (231 aa).

It belongs to the universal ribosomal protein uL1 family. In terms of assembly, part of the 50S ribosomal subunit.

In terms of biological role, binds directly to 23S rRNA. The L1 stalk is quite mobile in the ribosome, and is involved in E site tRNA release. Its function is as follows. Protein L1 is also a translational repressor protein, it controls the translation of the L11 operon by binding to its mRNA. The sequence is that of Large ribosomal subunit protein uL1 from Staphylococcus haemolyticus (strain JCSC1435).